Reading from the N-terminus, the 293-residue chain is MSALDNRLFAKMNGIGNEIVVVDLRDQPAPVTPADARAVAAHVPYDQLMLLQPARLSGTEAFVRIYNNDGSESGACGNGMRCVARQMFSGSEKNGLTFETRAGLLNCWRGPADGLYTVDMGEPKFGWQDIPLAEEFRDTRMIELQIGPIDAPVLHTPSVVSMGNPHAIFWVDDVNAYDLGRFGPLLENHPIFPERANITLAHIVDRQHITMRTWERGAGLTKACGSAACSTAVAAARLKRTDRTVEMTLPGGQLTIEWRESDNHVLMTGGAAFEFEGRFDPALFSGALDPTGA.

Residues Asn17, Gln47, and Asn67 each coordinate substrate. Cys76 (proton donor) is an active-site residue. Residues 77-78 (GN), Asn164, Asn197, and 215-216 (ER) each bind substrate. Cys224 (proton acceptor) is an active-site residue. Position 225–226 (225–226 (GS)) interacts with substrate.

This sequence belongs to the diaminopimelate epimerase family. As to quaternary structure, homodimer.

The protein resides in the cytoplasm. It catalyses the reaction (2S,6S)-2,6-diaminopimelate = meso-2,6-diaminopimelate. It functions in the pathway amino-acid biosynthesis; L-lysine biosynthesis via DAP pathway; DL-2,6-diaminopimelate from LL-2,6-diaminopimelate: step 1/1. Catalyzes the stereoinversion of LL-2,6-diaminopimelate (L,L-DAP) to meso-diaminopimelate (meso-DAP), a precursor of L-lysine and an essential component of the bacterial peptidoglycan. The chain is Diaminopimelate epimerase from Rhodopseudomonas palustris (strain ATCC BAA-98 / CGA009).